We begin with the raw amino-acid sequence, 289 residues long: HTH-type transcriptional regulator SoxR (289 aa).

An HTH lysR-type domain is found at 1 to 58; the sequence is MEIKDLQIFQKVVEYGSVSKAAKSLNYVQSYVTVRIQKLEEELQTELFHRSSRGMVLN. Residues 18-37 constitute a DNA-binding region (H-T-H motif); sequence VSKAAKSLNYVQSYVTVRIQ.

The protein belongs to the LysR transcriptional regulatory family.

In terms of biological role, transcriptional repressor of soxA gene expression. The polypeptide is HTH-type transcriptional regulator SoxR (soxR) (Arthrobacter sp. (strain TE1826)).